Here is a 305-residue protein sequence, read N- to C-terminus: uncharacterized protein (305 aa).

This is an uncharacterized protein from Acanthamoeba polyphaga mimivirus (APMV).